We begin with the raw amino-acid sequence, 206 residues long: Small ribosomal subunit protein uS4 (206 aa).

One can recognise an S4 RNA-binding domain in the interval 98-155 (TRLDNVVYRLGWALSRAQARQIVSHGKIAVNGKRVNIPSYNLKPGDVVELLDKDLIPV).

This sequence belongs to the universal ribosomal protein uS4 family. Part of the 30S ribosomal subunit. Contacts protein S5. The interaction surface between S4 and S5 is involved in control of translational fidelity.

Its function is as follows. One of the primary rRNA binding proteins, it binds directly to 16S rRNA where it nucleates assembly of the body of the 30S subunit. With S5 and S12 plays an important role in translational accuracy. The sequence is that of Small ribosomal subunit protein uS4 from Dictyoglomus turgidum (strain DSM 6724 / Z-1310).